A 219-amino-acid polypeptide reads, in one-letter code: Leucyl/phenylalanyl-tRNA--protein transferase (219 aa).

This sequence belongs to the L/F-transferase family.

It localises to the cytoplasm. The enzyme catalyses N-terminal L-lysyl-[protein] + L-leucyl-tRNA(Leu) = N-terminal L-leucyl-L-lysyl-[protein] + tRNA(Leu) + H(+). It carries out the reaction N-terminal L-arginyl-[protein] + L-leucyl-tRNA(Leu) = N-terminal L-leucyl-L-arginyl-[protein] + tRNA(Leu) + H(+). It catalyses the reaction L-phenylalanyl-tRNA(Phe) + an N-terminal L-alpha-aminoacyl-[protein] = an N-terminal L-phenylalanyl-L-alpha-aminoacyl-[protein] + tRNA(Phe). In terms of biological role, functions in the N-end rule pathway of protein degradation where it conjugates Leu, Phe and, less efficiently, Met from aminoacyl-tRNAs to the N-termini of proteins containing an N-terminal arginine or lysine. The polypeptide is Leucyl/phenylalanyl-tRNA--protein transferase (Leptospira borgpetersenii serovar Hardjo-bovis (strain JB197)).